Here is an 881-residue protein sequence, read N- to C-terminus: Low-affinity phosphate transporter PHO90 (881 aa).

Positions Met1 to Glu288 constitute an SPX domain. 12 helical membrane passes run Ile417–Ala437, Ala456–Leu476, Ile493–Glu513, Val514–Cys534, Val539–Ala559, Ala581–Ile601, Phe663–Val683, Phe691–Leu711, Ala718–Ser738, Gly758–Ser778, Ile805–Phe825, and Ala854–Val874.

It belongs to the CitM (TC 2.A.11) transporter family.

The protein localises to the membrane. Functionally, low-affinity phosphate transporter involved in the control of cellular phosphate levels. The sequence is that of Low-affinity phosphate transporter PHO90 (PHO90) from Saccharomyces cerevisiae (strain ATCC 204508 / S288c) (Baker's yeast).